A 310-amino-acid chain; its full sequence is N-acetyl-gamma-glutamyl-phosphate reductase (310 aa).

Residue C117 is part of the active site.

It belongs to the NAGSA dehydrogenase family. Type 2 subfamily.

Its subcellular location is the cytoplasm. It carries out the reaction N-acetyl-L-glutamate 5-semialdehyde + phosphate + NADP(+) = N-acetyl-L-glutamyl 5-phosphate + NADPH + H(+). It functions in the pathway amino-acid biosynthesis; L-arginine biosynthesis; N(2)-acetyl-L-ornithine from L-glutamate: step 3/4. Catalyzes the NADPH-dependent reduction of N-acetyl-5-glutamyl phosphate to yield N-acetyl-L-glutamate 5-semialdehyde. This Brucella abortus (strain S19) protein is N-acetyl-gamma-glutamyl-phosphate reductase.